Here is a 1219-residue protein sequence, read N- to C-terminus: Cullin-associated NEDD8-dissociated protein 1 (1219 aa).

N-acetylalanine is present on Ala2. 18 HEAT repeats span residues Asp44–Glu81, Arg83–Pro119, Lys209–Tyr244, Thr248–Arg288, Glu327–Glu363, Lys367–Asn404, Gln423–Asp460, Asp464–Pro503, Ala599–Asn636, Cys639–Asp676, Lys808–Leu848, Ala850–Gly883, Ser927–Glu964, Leu966–Glu998, Glu1002–Asn1039, Gly1043–Leu1079, Asn1101–Ser1137, and Ala1141–Ala1180. Positions Phe311–Glu340 are disordered. A compositionally biased stretch (acidic residues) spans Asn314 to Glu340.

It belongs to the CAND family. As to quaternary structure, interacts with CUL1 and CUL4. Binds unneddylated CUL1, but cannot bind CUL1 once it has been neddylated. In terms of tissue distribution, highly expressed in roots. Expressed in stems, flowers and siliques.

Its function is as follows. Key assembly factor of SCF (SKP1-CUL1-F-box protein) E3 ubiquitin ligase complexes that promotes the exchange of the substrate-recognition F-box subunit in SCF complexes, thereby playing a key role in the cellular repertoire of SCF complexes. Acts as a F-box protein exchange factor. Required for SCF(TIR1) function. Modulates SCF(TIR1) function through its interactions with the CUL1 subunit. Represses photomorphogenesis by promoting HY5 degradation in darkness. This chain is Cullin-associated NEDD8-dissociated protein 1 (CAND1), found in Arabidopsis thaliana (Mouse-ear cress).